Reading from the N-terminus, the 456-residue chain is Equilibrative nucleoside transporter 2 (456 aa).

The chain crosses the membrane as a helical span at residues 13-33 (LVGISFFILGLGTLLPWNFFI). Asparagine 48 and asparagine 57 each carry an N-linked (GlcNAc...) asparagine glycan. Transmembrane regions (helical) follow at residues 70–90 (WVTL…SFLY), 99–119 (ILGS…LVKV), 124–144 (GPFF…SAVL), 162–182 (LFLS…LLSM), and 193–213 (LGYF…YLSL). A glycan (N-linked (GlcNAc...) asparagine) is linked at asparagine 225. Residue serine 252 is modified to Phosphoserine. Transmembrane regions (helical) follow at residues 291-311 (WLTA…FPAI), 324-344 (WSQF…DWLG), 360-380 (LLPL…LCHV), 386-406 (LPIL…FAVS), and 432-452 (ALMT…SFLF).

Belongs to the SLC29A/ENT transporter (TC 2.A.57) family. In terms of processing, glycosylated. Highly expressed in skeletal muscle. Expressed in liver, lung, placenta, brain, heart, kidney and ovarian tissues. Expressed in testis at the blood-brain-barrier.

Its subcellular location is the apical cell membrane. It localises to the basolateral cell membrane. It carries out the reaction inosine(in) = inosine(out). It catalyses the reaction adenosine(in) = adenosine(out). The enzyme catalyses uridine(out) = uridine(in). The catalysed reaction is thymidine(in) = thymidine(out). It carries out the reaction hypoxanthine(out) = hypoxanthine(in). It catalyses the reaction adenine(out) = adenine(in). The enzyme catalyses cytidine(in) = cytidine(out). The catalysed reaction is thymine(out) = thymine(in). It carries out the reaction uracil(in) = uracil(out). It catalyses the reaction guanine(out) = guanine(in). The enzyme catalyses guanosine(in) = guanosine(out). Bidirectional uniporter involved in the facilitative transport of nucleosides and nucleobases, and contributes to maintaining their cellular homeostasis. Functions as a Na(+)-independent, passive transporter. Involved in the transport of nucleosides such as inosine, adenosine, uridine, thymidine, cytidine and guanosine. Also able to transport purine nucleobases (hypoxanthine, adenine, guanine) and pyrimidine nucleobases (thymine, uracil). Involved in nucleoside transport at basolateral membrane of kidney cells, allowing liver absorption of nucleoside metabolites. Mediates apical nucleoside uptake into Sertoli cells, thereby regulating the transport of nucleosides in testis across the blood-testis-barrier. Mediates both the influx and efflux of hypoxanthine in skeletal muscle microvascular endothelial cells to control the amount of intracellular hypoxanthine available for xanthine oxidase-mediated ROS production. In terms of biological role, non functional nucleoside transporter protein for adenosine or thymidine transport. Does not express on cell membrane. In Homo sapiens (Human), this protein is Equilibrative nucleoside transporter 2.